Here is a 367-residue protein sequence, read N- to C-terminus: UDP-N-acetylglucosamine--N-acetylmuramyl-(pentapeptide) pyrophosphoryl-undecaprenol N-acetylglucosamine transferase (367 aa).

UDP-N-acetyl-alpha-D-glucosamine-binding positions include 10-12 (TGG), N124, S196, and Q300.

The protein belongs to the glycosyltransferase 28 family. MurG subfamily.

It localises to the cell membrane. The enzyme catalyses di-trans,octa-cis-undecaprenyl diphospho-N-acetyl-alpha-D-muramoyl-L-alanyl-D-glutamyl-meso-2,6-diaminopimeloyl-D-alanyl-D-alanine + UDP-N-acetyl-alpha-D-glucosamine = di-trans,octa-cis-undecaprenyl diphospho-[N-acetyl-alpha-D-glucosaminyl-(1-&gt;4)]-N-acetyl-alpha-D-muramoyl-L-alanyl-D-glutamyl-meso-2,6-diaminopimeloyl-D-alanyl-D-alanine + UDP + H(+). The protein operates within cell wall biogenesis; peptidoglycan biosynthesis. Cell wall formation. Catalyzes the transfer of a GlcNAc subunit on undecaprenyl-pyrophosphoryl-MurNAc-pentapeptide (lipid intermediate I) to form undecaprenyl-pyrophosphoryl-MurNAc-(pentapeptide)GlcNAc (lipid intermediate II). This is UDP-N-acetylglucosamine--N-acetylmuramyl-(pentapeptide) pyrophosphoryl-undecaprenol N-acetylglucosamine transferase from Natranaerobius thermophilus (strain ATCC BAA-1301 / DSM 18059 / JW/NM-WN-LF).